Here is a 105-residue protein sequence, read N- to C-terminus: uncharacterized protein (105 aa).

The Helicase C-terminal domain maps to glutamine 2–arginine 42.

Belongs to the helicase family. Yeast subtelomeric Y' repeat subfamily.

This is an uncharacterized protein from Saccharomyces cerevisiae (strain ATCC 204508 / S288c) (Baker's yeast).